A 170-amino-acid chain; its full sequence is uncharacterized protein (170 aa).

This is an uncharacterized protein from Ureaplasma parvum serovar 3 (strain ATCC 700970).